A 199-amino-acid polypeptide reads, in one-letter code: V-type proton ATPase subunit E (199 aa).

The protein belongs to the V-ATPase E subunit family.

In terms of biological role, produces ATP from ADP in the presence of a proton gradient across the membrane. This is V-type proton ATPase subunit E from Clostridium botulinum (strain 657 / Type Ba4).